We begin with the raw amino-acid sequence, 239 residues long: 1-(5-phosphoribosyl)-5-[(5-phosphoribosylamino)methylideneamino] imidazole-4-carboxamide isomerase (239 aa).

The active-site Proton acceptor is aspartate 12. Aspartate 132 serves as the catalytic Proton donor.

Belongs to the HisA/HisF family.

Its subcellular location is the cytoplasm. It carries out the reaction 1-(5-phospho-beta-D-ribosyl)-5-[(5-phospho-beta-D-ribosylamino)methylideneamino]imidazole-4-carboxamide = 5-[(5-phospho-1-deoxy-D-ribulos-1-ylimino)methylamino]-1-(5-phospho-beta-D-ribosyl)imidazole-4-carboxamide. It participates in amino-acid biosynthesis; L-histidine biosynthesis; L-histidine from 5-phospho-alpha-D-ribose 1-diphosphate: step 4/9. This is 1-(5-phosphoribosyl)-5-[(5-phosphoribosylamino)methylideneamino] imidazole-4-carboxamide isomerase from Natronomonas pharaonis (strain ATCC 35678 / DSM 2160 / CIP 103997 / JCM 8858 / NBRC 14720 / NCIMB 2260 / Gabara) (Halobacterium pharaonis).